The chain runs to 328 residues: Probable magnesium transporter NIPA6 (328 aa).

Topologically, residues 1-4 (METD) are extracellular. Residues 5–25 (NGKGLILAVASSVFIGSSFIL) form a helical membrane-spanning segment. Residues 26–51 (KKKGLKRAGAIGTRAGYGGYTYLLEP) are Cytoplasmic-facing. The chain crosses the membrane as a helical span at residues 52 to 72 (LWWAGMVTMIVGEAANFVAYI). At 73–76 (YAPA) the chain is on the extracellular side. Residues 77–97 (VLVTPLGALSIIISAVLAHFL) form a helical membrane-spanning segment. Topologically, residues 98-104 (LKEKLKK) are cytoplasmic. The chain crosses the membrane as a helical span at residues 105-125 (MGVLGCVSCIVGSVVIVIHAP). Over 126 to 142 (KEQTPNSVEEIWNLATQ) the chain is Extracellular. A helical membrane pass occupies residues 143-163 (PAFLIYVAITMSIVLALILHF). Residues 164-175 (EPLCGQTNILVY) are Cytoplasmic-facing. A helical transmembrane segment spans residues 176-196 (IGICSLMGALTVMSIKAIGIA). Topologically, residues 197 to 209 (IKLTMEGVSQIGY) are extracellular. The chain crosses the membrane as a helical span at residues 210 to 230 (PQTWLFVMVAVTCVVTQLIYL). At 231 to 240 (NKALDTFNAA) the chain is on the cytoplasmic side. A helical transmembrane segment spans residues 241–261 (IVSPVYYVMFTTLTIVASAIM). Over 262–269 (FKDWSGQD) the chain is Extracellular. Residues 270 to 290 (AASVASELCGFITVLTGTMIL) traverse the membrane as a helical segment. Residues 291-328 (HGTREEEQQQASSEHVRWYDSRKSMNEEHLVSLYSPEY) are Cytoplasmic-facing.

The protein belongs to the NIPA (TC 2.A.7) family. In terms of assembly, homodimer.

Its subcellular location is the cell membrane. The protein localises to the early endosome. Functionally, acts as a Mg(2+) transporter. Can also transport other divalent cations such as Fe(2+), Sr(2+), Ba(2+), Mn(2+) and Co(2+) but to a much less extent than Mg(2+). This is Probable magnesium transporter NIPA6 from Arabidopsis thaliana (Mouse-ear cress).